We begin with the raw amino-acid sequence, 420 residues long: Glucose-1-phosphate adenylyltransferase (420 aa).

Alpha-D-glucose 1-phosphate-binding positions include Tyr-107, Gly-173, 188-189, and Ser-206; that span reads EK.

The protein belongs to the bacterial/plant glucose-1-phosphate adenylyltransferase family. As to quaternary structure, homotetramer.

The enzyme catalyses alpha-D-glucose 1-phosphate + ATP + H(+) = ADP-alpha-D-glucose + diphosphate. It functions in the pathway glycan biosynthesis; glycogen biosynthesis. In terms of biological role, involved in the biosynthesis of ADP-glucose, a building block required for the elongation reactions to produce glycogen. Catalyzes the reaction between ATP and alpha-D-glucose 1-phosphate (G1P) to produce pyrophosphate and ADP-Glc. The protein is Glucose-1-phosphate adenylyltransferase of Shewanella baltica (strain OS185).